Here is a 202-residue protein sequence, read N- to C-terminus: FMN-dependent NADH:quinone oxidoreductase (202 aa).

FMN-binding positions include Ser10, 16–18 (SHS), and 96–99 (MYNF).

This sequence belongs to the azoreductase type 1 family. Homodimer. It depends on FMN as a cofactor.

The catalysed reaction is 2 a quinone + NADH + H(+) = 2 a 1,4-benzosemiquinone + NAD(+). It carries out the reaction N,N-dimethyl-1,4-phenylenediamine + anthranilate + 2 NAD(+) = 2-(4-dimethylaminophenyl)diazenylbenzoate + 2 NADH + 2 H(+). In terms of biological role, quinone reductase that provides resistance to thiol-specific stress caused by electrophilic quinones. Functionally, also exhibits azoreductase activity. Catalyzes the reductive cleavage of the azo bond in aromatic azo compounds to the corresponding amines. In Hydrogenovibrio crunogenus (strain DSM 25203 / XCL-2) (Thiomicrospira crunogena), this protein is FMN-dependent NADH:quinone oxidoreductase.